The primary structure comprises 626 residues: Chaperone protein HtpG (626 aa).

The interval 1–339 (MSQNQETRGF…SNDLPLNVSR (339 aa)) is a; substrate-binding. The interval 340 to 555 (EILQDNKITA…NDQMTTQMAK (216 aa)) is b. A c region spans residues 556-626 (LFAAAGQPVP…FIKRINKLLG (71 aa)).

Belongs to the heat shock protein 90 family. As to quaternary structure, homodimer.

The protein localises to the cytoplasm. Molecular chaperone. Has ATPase activity. This is Chaperone protein HtpG from Haemophilus influenzae (strain PittEE).